The sequence spans 105 residues: UPF0235 protein A1E_05380 (105 aa).

It belongs to the UPF0235 family.

This chain is UPF0235 protein A1E_05380, found in Rickettsia canadensis (strain McKiel).